A 393-amino-acid chain; its full sequence is Cysteine protease ATG4B (393 aa).

Position 1 is an N-acetylmethionine (methionine 1). Phosphoserine is present on serine 34. The active-site Nucleophile is the cysteine 74. Cysteine 189 is subject to S-nitrosocysteine. Catalysis depends on residues aspartate 278 and histidine 280. Cysteine 292 and cysteine 301 each carry S-nitrosocysteine. Cysteines 292 and 361 form a disulfide. Serine 316 and serine 383 each carry phosphoserine. An LIR motif is present at residues phenylalanine 388–leucine 391. The residue at position 392 (serine 392) is a Phosphoserine.

It belongs to the peptidase C54 family. As to quaternary structure, interacts with PFKP; promoting phosphorylation of ATG4B at Ser-34. Interacts with GBP7. Post-translationally, phosphorylation at Ser-383 and Ser-392 promotes autophagy by increasing protein delipidation activity without affecting proteolytic activation of ATG8 proteins. Phosphorylation at Ser-316 by ULK1 inhibits autophagy by decreasing both proteolytic activation and delipidation activities. Phosphorylation at Ser-316 is dephosphorylated by protein phosphatase 2A (PP2A). Phosphorylation at Ser-34 by AKT2 promotes its hydrolase activity, leading to increased proteolytic activation and delipidation of ATG8 family proteins. Phosphorylation at Ser-34 by AKT1 promotes mitochondrial localization and inhibition of the F1F0-ATP synthase activity, leading to elevation of mitochondrial reactive oxygen species (ROS). Ubiquitinated by RNF5, leading to its degradation by the proteasome. In terms of processing, S-nitrosylation in response to high glucose decreases both proteolytic activation and delipidation activities. Post-translationally, O-glycosylated by OGT, leading to increase protease activity, thereby promoting the proteolytic activation of ATG8 family proteins. Forms reversible intrachain disulfide bonds in response to oxidative stress. Forms interchain disulfide bonds, leading to formation of homooligomers in response to oxidation.

It localises to the cytoplasm. The protein localises to the cytosol. The protein resides in the cytoplasmic vesicle. It is found in the autophagosome. Its subcellular location is the endoplasmic reticulum. It localises to the mitochondrion. The catalysed reaction is [protein]-C-terminal L-amino acid-glycyl-phosphatidylethanolamide + H2O = [protein]-C-terminal L-amino acid-glycine + a 1,2-diacyl-sn-glycero-3-phosphoethanolamine. The enzyme catalyses [protein]-C-terminal L-amino acid-glycyl-phosphatidylserine + H2O = [protein]-C-terminal L-amino acid-glycine + a 1,2-diacyl-sn-glycero-3-phospho-L-serine. Its activity is regulated as follows. Inhibited by N-ethylmaleimide. Redox-regulated during autophagy since reducing conditions activate ATG4A whereas an oxidizing environment such as the presence of H(2)O(2) inhibits its activity. The cysteine protease activity compounds is inhibited by styrylquinoline compounds 4-28 and LV-320. In terms of biological role, cysteine protease that plays a key role in autophagy by mediating both proteolytic activation and delipidation of ATG8 family proteins. Required for canonical autophagy (macroautophagy), non-canonical autophagy as well as for mitophagy. The protease activity is required for proteolytic activation of ATG8 family proteins: cleaves the C-terminal amino acid of ATG8 proteins MAP1LC3A, MAP1LC3B, MAP1LC3C, GABARAPL1, GABARAPL2 and GABARAP, to reveal a C-terminal glycine. Exposure of the glycine at the C-terminus is essential for ATG8 proteins conjugation to phosphatidylethanolamine (PE) and insertion to membranes, which is necessary for autophagy. Protease activity is also required to counteract formation of high-molecular weight conjugates of ATG8 proteins (ATG8ylation): acts as a deubiquitinating-like enzyme that removes ATG8 conjugated to other proteins, such as ATG3. In addition to the protease activity, also mediates delipidation of ATG8 family proteins. Catalyzes delipidation of PE-conjugated forms of ATG8 proteins during macroautophagy. Also involved in non-canonical autophagy, a parallel pathway involving conjugation of ATG8 proteins to single membranes at endolysosomal compartments, by catalyzing delipidation of ATG8 proteins conjugated to phosphatidylserine (PS). Compared to other members of the family (ATG4A, ATG4C or ATG4C), constitutes the major protein for proteolytic activation of ATG8 proteins, while it displays weaker delipidation activity than other ATG4 paralogs. Involved in phagophore growth during mitophagy independently of its protease activity and of ATG8 proteins: acts by regulating ATG9A trafficking to mitochondria and promoting phagophore-endoplasmic reticulum contacts during the lipid transfer phase of mitophagy. In Rattus norvegicus (Rat), this protein is Cysteine protease ATG4B.